A 612-amino-acid chain; its full sequence is Dihydroxy-acid dehydratase (612 aa).

Asp81 serves as a coordination point for Mg(2+). Position 122 (Cys122) interacts with [2Fe-2S] cluster. Mg(2+) is bound by residues Asp123 and Lys124. Residue Lys124 is modified to N6-carboxylysine. Position 193 (Cys193) interacts with [2Fe-2S] cluster. Glu489 serves as a coordination point for Mg(2+). Ser515 (proton acceptor) is an active-site residue.

This sequence belongs to the IlvD/Edd family. In terms of assembly, homodimer. [2Fe-2S] cluster serves as cofactor. The cofactor is Mg(2+).

The enzyme catalyses (2R)-2,3-dihydroxy-3-methylbutanoate = 3-methyl-2-oxobutanoate + H2O. It carries out the reaction (2R,3R)-2,3-dihydroxy-3-methylpentanoate = (S)-3-methyl-2-oxopentanoate + H2O. It functions in the pathway amino-acid biosynthesis; L-isoleucine biosynthesis; L-isoleucine from 2-oxobutanoate: step 3/4. Its pathway is amino-acid biosynthesis; L-valine biosynthesis; L-valine from pyruvate: step 3/4. Its function is as follows. Functions in the biosynthesis of branched-chain amino acids. Catalyzes the dehydration of (2R,3R)-2,3-dihydroxy-3-methylpentanoate (2,3-dihydroxy-3-methylvalerate) into 2-oxo-3-methylpentanoate (2-oxo-3-methylvalerate) and of (2R)-2,3-dihydroxy-3-methylbutanoate (2,3-dihydroxyisovalerate) into 2-oxo-3-methylbutanoate (2-oxoisovalerate), the penultimate precursor to L-isoleucine and L-valine, respectively. This chain is Dihydroxy-acid dehydratase, found in Xanthomonas campestris pv. campestris (strain 8004).